Reading from the N-terminus, the 61-residue chain is Small ribosomal subunit protein uS14 (61 aa).

Zn(2+) is bound by residues C24, C27, C40, and C43.

It belongs to the universal ribosomal protein uS14 family. Zinc-binding uS14 subfamily. Part of the 30S ribosomal subunit. Contacts proteins S3 and S10. Zn(2+) is required as a cofactor.

Functionally, binds 16S rRNA, required for the assembly of 30S particles and may also be responsible for determining the conformation of the 16S rRNA at the A site. The chain is Small ribosomal subunit protein uS14 from Mycoplasma genitalium (strain ATCC 33530 / DSM 19775 / NCTC 10195 / G37) (Mycoplasmoides genitalium).